A 499-amino-acid polypeptide reads, in one-letter code: Probable malate:quinone oxidoreductase 4 (499 aa).

This sequence belongs to the MQO family. FAD serves as cofactor.

The enzyme catalyses (S)-malate + a quinone = a quinol + oxaloacetate. It functions in the pathway carbohydrate metabolism; tricarboxylic acid cycle; oxaloacetate from (S)-malate (quinone route): step 1/1. The polypeptide is Probable malate:quinone oxidoreductase 4 (Staphylococcus epidermidis (strain ATCC 35984 / DSM 28319 / BCRC 17069 / CCUG 31568 / BM 3577 / RP62A)).